The primary structure comprises 457 residues: Zinc finger protein ZIPIC (457 aa).

The 82-residue stretch at 3–84 (CCICQFSVRV…ILELIHSPYM (82 aa)) folds into the ZAD domain. 6 consecutive C2H2-type zinc fingers follow at residues 257–280 (IQCPSCPEKFSSRRAYNVHTKREH), 284–306 (YVCDQCGKTLQSYSGFIGHLQNH), 312–334 (FACPVCPERFSRKFRLKHHMAWH), 340–362 (YQCDVCSKRFVHKVALYKHKMIH), 369–391 (LECQVCGFKTRTKAHLERHMRSH), and 397–419 (FACPVCNKRFSQMYNMKAHLREH). A C2H2-type 7; degenerate zinc finger spans residues 430–448 (FHCSKCTHTFINEQNYDAH).

In terms of assembly, interacts (via region between the ZAD domain and the first zinc finger domain) with Cp190 (via centrosomal targeting M domain); the interaction is direct. Interacts with pita.

It is found in the nucleus. The protein localises to the chromosome. Insulator DNA-binding protein. Recruits Cp190 and cooperatively binds to chromatin promoter regions to exert transcriptional regulator and chromatin insulator functions. Chromatin insulators are regulatory elements that establish independent domains of transcriptional activity within eukaryotic genomes. Insulators are proposed to structure the chromatin fiber into independent domains of differing transcriptional potential by promoting the formation of distinct chromatin loops to form topologically associating domains (TADs). Chromatin binding sites often cluster with those of other insulator DNA-binding proteins such as pita, CTCF and BEAF-32, but not Su(Hw). This chain is Zinc finger protein ZIPIC, found in Drosophila melanogaster (Fruit fly).